The primary structure comprises 142 residues: Large ribosomal subunit protein uL11 (142 aa).

The protein belongs to the universal ribosomal protein uL11 family. In terms of assembly, part of the ribosomal stalk of the 50S ribosomal subunit. Interacts with L10 and the large rRNA to form the base of the stalk. L10 forms an elongated spine to which L12 dimers bind in a sequential fashion forming a multimeric L10(L12)X complex. One or more lysine residues are methylated.

In terms of biological role, forms part of the ribosomal stalk which helps the ribosome interact with GTP-bound translation factors. The chain is Large ribosomal subunit protein uL11 from Pectobacterium carotovorum subsp. carotovorum (strain PC1).